Consider the following 477-residue polypeptide: MIGLIIVSHSKLLADGLHQLAAQMQNKQKCHIITAAGVDDETHPIGTDAVKVMEAIESLSDAEHIILLMDLGSALLSAETALDLIDPDLAEKVHLCSAPLVEGAIAITAAASGGASIDEILNEAQQALQAKQQQLNDTVTTTENEKDKHTHFSEQALTTQWVVKNPSGLHIRPAAKLATLLSGFTATLELRHGEKRADAKSMNQIALLQVRQGDKITLVAEGVDSQNAINAFNQLAQHNFGDNIATTDSKTFVGKTAYVPTVAGLAHHHAPNTELCISSYQTSENETRRATKAIEQLKTHLDSLANTLNEQYGEEIANIFRGHRLLLEDDELVESITQSIENECNTAYDAISNIFNNMSKQYQQLDDEYLQARFIDIEDLKNQLLMSISSVAQPSCAFTEPTIILSGNLGPSELLRYRNTNVVGVALANGSPYSHTCIIAAKMGLPILTDLGDNIHQIAEQTKLQLSIETRSLIVAS.

The PTS EIIA type-4 domain maps to 1–135 (MIGLIIVSHS…QALQAKQQQL (135 aa)). His9 functions as the Tele-phosphohistidine intermediate in the catalytic mechanism. Residues 156 to 243 (ALTTQWVVKN…QLAQHNFGDN (88 aa)) form the HPr domain. The Pros-phosphohistidine intermediate role is filled by His170. The PTS EI-like, N-terminal part stretch occupies residues 269 to 477 (HAPNTELCIS…IETRSLIVAS (209 aa)). The active-site Tele-phosphohistidine intermediate is His435.

Belongs to the PEP-utilizing enzyme family. Homodimer. The dihydroxyacetone kinase complex is composed of a homodimer of DhaM, a homodimer of DhaK and the subunit DhaL.

The catalysed reaction is dihydroxyacetone + phosphoenolpyruvate = dihydroxyacetone phosphate + pyruvate. In terms of biological role, component of the dihydroxyacetone kinase complex, which is responsible for the phosphoenolpyruvate (PEP)-dependent phosphorylation of dihydroxyacetone. DhaM serves as the phosphoryl donor. Is phosphorylated by phosphoenolpyruvate in an EI- and HPr-dependent reaction, and a phosphorelay system on histidine residues finally leads to phosphoryl transfer to DhaL and dihydroxyacetone. This Providencia stuartii (strain MRSN 2154) protein is PEP-dependent dihydroxyacetone kinase, phosphoryl donor subunit DhaM.